The chain runs to 95 residues: MLKPLGDRVVLKFEAEKEQTVGGFVLAASHKEATKVGTVVAVSETGIRTITGDIVPPSVAVGDKVLVEYGSGLEVKDGDQELVICREADILAVLA.

The protein belongs to the GroES chaperonin family. In terms of assembly, heptamer of 7 subunits arranged in a ring. Interacts with the chaperonin GroEL.

It localises to the cytoplasm. Together with the chaperonin GroEL, plays an essential role in assisting protein folding. The GroEL-GroES system forms a nano-cage that allows encapsulation of the non-native substrate proteins and provides a physical environment optimized to promote and accelerate protein folding. GroES binds to the apical surface of the GroEL ring, thereby capping the opening of the GroEL channel. The protein is Co-chaperonin GroES of Streptococcus equi subsp. equi (strain 4047).